The following is a 427-amino-acid chain: Enolase (427 aa).

Q163 provides a ligand contact to (2R)-2-phosphoglycerate. Catalysis depends on E205, which acts as the Proton donor. Mg(2+) contacts are provided by D242, E285, and D312. Positions 337, 366, 367, and 388 each coordinate (2R)-2-phosphoglycerate. The active-site Proton acceptor is K337.

This sequence belongs to the enolase family. Mg(2+) is required as a cofactor.

It localises to the cytoplasm. Its subcellular location is the secreted. The protein localises to the cell surface. The catalysed reaction is (2R)-2-phosphoglycerate = phosphoenolpyruvate + H2O. The protein operates within carbohydrate degradation; glycolysis; pyruvate from D-glyceraldehyde 3-phosphate: step 4/5. Functionally, catalyzes the reversible conversion of 2-phosphoglycerate (2-PG) into phosphoenolpyruvate (PEP). It is essential for the degradation of carbohydrates via glycolysis. The polypeptide is Enolase (Rhodopseudomonas palustris (strain BisA53)).